A 457-amino-acid polypeptide reads, in one-letter code: Proton-translocating ferredoxin:NAD(+) oxidoreductase complex subunit C (457 aa).

2 consecutive 4Fe-4S ferredoxin-type domains span residues 353–386 (TKND…MLSI) and 396–427 (AKEE…YIRY). [4Fe-4S] cluster contacts are provided by C365, C368, C371, C375, C405, C408, C411, and C415. Residues 433-457 (RAAGEREKAKAAKAKEKKEKEEVLK) are disordered.

Belongs to the 4Fe4S bacterial-type ferredoxin family. RnfC subfamily. As to quaternary structure, the complex is composed of six subunits: RnfA, RnfB, RnfC, RnfD, RnfE and RnfG. Requires [4Fe-4S] cluster as cofactor.

The protein resides in the cell membrane. Its function is as follows. Part of a membrane-bound complex that couples electron transfer with translocation of ions across the membrane. Couples electron transfer from reduced ferredoxin to NAD(+) with translocation of H(+) out of the cell. Essential for energy conservation during autotrophic growth. Contributes to ATP synthesis during heterotrophic growth. The chain is Proton-translocating ferredoxin:NAD(+) oxidoreductase complex subunit C from Clostridium ljungdahlii (strain ATCC 55383 / DSM 13528 / PETC).